The chain runs to 757 residues: Polyribonucleotide nucleotidyltransferase (757 aa).

2 residues coordinate Mg(2+): Asp487 and Asp493. One can recognise a KH domain in the interval 554-613 (PRITTVRVKPDQIRLIIGPGGKTIKGIVDQTGVAIDVEDDGTVNVASADSDAVKRALDII). The S1 motif domain maps to 623 to 691 (GATYKGTVKR…REGKIRLSRR (69 aa)). Positions 697–757 (PEGEEGDRAR…PPRERRERRS (61 aa)) are disordered. Basic and acidic residues-rich tracts occupy residues 702 to 711 (GDRARERMAQ) and 719 to 757 (PRRD…ERRS).

This sequence belongs to the polyribonucleotide nucleotidyltransferase family. It depends on Mg(2+) as a cofactor.

It localises to the cytoplasm. It catalyses the reaction RNA(n+1) + phosphate = RNA(n) + a ribonucleoside 5'-diphosphate. Functionally, involved in mRNA degradation. Catalyzes the phosphorolysis of single-stranded polyribonucleotides processively in the 3'- to 5'-direction. The sequence is that of Polyribonucleotide nucleotidyltransferase from Sorangium cellulosum (strain So ce56) (Polyangium cellulosum (strain So ce56)).